The chain runs to 507 residues: UDP-N-acetylhexosamine pyrophosphorylase-like protein 1 (507 aa).

The segment at 56-91 (ACARPHGPPPDLAARLRPLPPERVGRASRSDPETRR) is disordered. Positions 78–91 (RVGRASRSDPETRR) are enriched in basic and acidic residues. Residues 111 to 114 (LAGG) carry the Substrate binding motif. UTP-binding positions include 111-114 (LAGG), K125, Q199, and G225. N226 lines the substrate pocket. UTP is bound at residue D256. The Substrate binding motif lies at 306–307 (EY). Residue K380 participates in UTP binding. K410 lines the substrate pocket.

The protein belongs to the UDPGP type 1 family.

This is UDP-N-acetylhexosamine pyrophosphorylase-like protein 1 (UAP1L1) from Homo sapiens (Human).